The following is an 84-amino-acid chain: Delta-thalatoxin-Tas1a (84 aa).

A signal peptide spans 1–19 (MAYLKIVLVALMLVLAVSA). Residues 20–33 (MRRPDQQDQDISVA) constitute a propeptide that is removed on maturation. 3 disulfides stabilise this stretch: C38–C78, C40–C68, and C61–C79.

This sequence belongs to the sea anemone sodium channel inhibitory toxin family. Type II subfamily.

The protein resides in the secreted. It localises to the nematocyst. Its function is as follows. Binds specifically to the voltage-gated sodium channel (Nav) and delays its inactivation. This Thalassianthus aster (Fuzzy-tipped anemone) protein is Delta-thalatoxin-Tas1a.